Here is a 173-residue protein sequence, read N- to C-terminus: RNA polymerase sigma factor YlaC (173 aa).

Belongs to the sigma-70 factor family. ECF subfamily.

Functionally, sigma factors are initiation factors that promote the attachment of RNA polymerase to specific initiation sites and are then released. This sigma factor contributes to oxidative stress resistance. This chain is RNA polymerase sigma factor YlaC (ylaC), found in Bacillus subtilis (strain 168).